A 217-amino-acid polypeptide reads, in one-letter code: Large ribosomal subunit protein uL29m (217 aa).

Belongs to the universal ribosomal protein uL29 family. In terms of assembly, component of the mitochondrial large ribosomal subunit. Mature mitochondrial ribosomes consist of a small (37S) and a large (54S) subunit. The 37S subunit contains at least 33 different proteins and 1 molecule of RNA (15S). The 54S subunit contains at least 45 different proteins and 1 molecule of RNA (21S).

The protein resides in the mitochondrion. The chain is Large ribosomal subunit protein uL29m (mrpl4) from Aspergillus fumigatus (strain ATCC MYA-4609 / CBS 101355 / FGSC A1100 / Af293) (Neosartorya fumigata).